The primary structure comprises 499 residues: Replication factor C large subunit (499 aa).

An ATP-binding site is contributed by 50–57 (GPPGVGKT). A disordered region spans residues 428 to 499 (EAERRVEAAE…QATLFDFLKK (72 aa)). Acidic residues predominate over residues 436–472 (AEEEETMEAGEPEEELEEVEEEELTEEELEEAEEEIE). Residues 473 to 484 (TVGKKEKPEKEK) show a composition bias toward basic and acidic residues.

It belongs to the activator 1 small subunits family. RfcL subfamily. Heteromultimer composed of small subunits (RfcS) and large subunits (RfcL).

Part of the RFC clamp loader complex which loads the PCNA sliding clamp onto DNA. This Thermococcus kodakarensis (strain ATCC BAA-918 / JCM 12380 / KOD1) (Pyrococcus kodakaraensis (strain KOD1)) protein is Replication factor C large subunit.